A 176-amino-acid polypeptide reads, in one-letter code: Cytochrome b (176 aa).

3 helical membrane passes run 33 to 53 (FGSL…FLAM), 77 to 98 (WLLR…YLHI), and 113 to 133 (WNVG…GYVL). Residues H83 and H97 each coordinate heme b.

It belongs to the cytochrome b family. In terms of assembly, the cytochrome bc1 complex contains 11 subunits: 3 respiratory subunits (MT-CYB, CYC1 and UQCRFS1), 2 core proteins (UQCRC1 and UQCRC2) and 6 low-molecular weight proteins (UQCRH/QCR6, UQCRB/QCR7, UQCRQ/QCR8, UQCR10/QCR9, UQCR11/QCR10 and a cleavage product of UQCRFS1). This cytochrome bc1 complex then forms a dimer. The cofactor is heme b.

It is found in the mitochondrion inner membrane. In terms of biological role, component of the ubiquinol-cytochrome c reductase complex (complex III or cytochrome b-c1 complex) that is part of the mitochondrial respiratory chain. The b-c1 complex mediates electron transfer from ubiquinol to cytochrome c. Contributes to the generation of a proton gradient across the mitochondrial membrane that is then used for ATP synthesis. The protein is Cytochrome b (MT-CYB) of Eumops perotis (Western bonneted bat).